Here is a 1183-residue protein sequence, read N- to C-terminus: DNA-directed RNA polymerase subunit beta (1183 aa).

Belongs to the RNA polymerase beta chain family. In terms of assembly, the RNAP catalytic core consists of 2 alpha, 1 beta, 1 beta' and 1 omega subunit. When a sigma factor is associated with the core the holoenzyme is formed, which can initiate transcription.

It carries out the reaction RNA(n) + a ribonucleoside 5'-triphosphate = RNA(n+1) + diphosphate. In terms of biological role, DNA-dependent RNA polymerase catalyzes the transcription of DNA into RNA using the four ribonucleoside triphosphates as substrates. This chain is DNA-directed RNA polymerase subunit beta, found in Staphylococcus aureus (strain MRSA252).